A 161-amino-acid chain; its full sequence is Ribosome maturation factor RimP (161 aa).

It belongs to the RimP family.

It localises to the cytoplasm. In terms of biological role, required for maturation of 30S ribosomal subunits. This Rickettsia rickettsii (strain Iowa) protein is Ribosome maturation factor RimP.